The following is an 83-amino-acid chain: Apolipoprotein C-I (83 aa).

Positions 1–26 (MRLILSLPVLAVVLAMVLEGPAPAQA) are cleaved as a signal peptide.

The protein belongs to the apolipoprotein C1 family.

It is found in the secreted. Functionally, inhibitor of lipoprotein binding to the low density lipoprotein (LDL) receptor, LDL receptor-related protein, and very low density lipoprotein (VLDL) receptor. Associates with high density lipoproteins (HDL) and the triacylglycerol-rich lipoproteins in the plasma and makes up about 10% of the protein of the VLDL and 2% of that of HDL. Appears to interfere directly with fatty acid uptake and is also the major plasma inhibitor of cholesteryl ester transfer protein (CETP). Binds free fatty acids and reduces their intracellular esterification. Modulates the interaction of APOE with beta-migrating VLDL and inhibits binding of beta-VLDL to the LDL receptor-related protein. The chain is Apolipoprotein C-I (APOC1) from Eonycteris spelaea (Lesser dawn bat).